The following is an 805-amino-acid chain: Nitrite reductase [NAD(P)H] (805 aa).

An FAD-binding site is contributed by 43–79; that stretch reads YNRILLSKVLQGDTDIKDITLNDWDWYEENNIQLYTN. Residue 193–223 participates in NADP(+) binding; the sequence is LQNELEKQGMTFLLEKQTEEIVGDDRVEGLR. [2Fe-2S] cluster-binding residues include C418, C420, C453, and C456. 4 residues coordinate [4Fe-4S] cluster: C635, C641, C675, and C679. Siroheme is bound at residue C679.

It belongs to the nitrite and sulfite reductase 4Fe-4S domain family. As to quaternary structure, homodimer. It depends on siroheme as a cofactor. The cofactor is [2Fe-2S] cluster. [4Fe-4S] cluster serves as cofactor. Requires FAD as cofactor.

The enzyme catalyses NH4(+) + 3 NADP(+) + 2 H2O = nitrite + 3 NADPH + 5 H(+). The catalysed reaction is NH4(+) + 3 NAD(+) + 2 H2O = nitrite + 3 NADH + 5 H(+). It functions in the pathway nitrogen metabolism; nitrate reduction (assimilation). Required for nitrite assimilation. This Bacillus subtilis (strain 168) protein is Nitrite reductase [NAD(P)H] (nasD).